Consider the following 360-residue polypeptide: 3-dehydroquinate synthase (360 aa).

Residues 104–108, 128–129, Lys-141, and 168–171 contribute to the NAD(+) site; these read GVIGD, TT, and FLDT. Zn(2+) contacts are provided by Glu-183, His-243, and His-260.

It belongs to the sugar phosphate cyclases superfamily. Dehydroquinate synthase family. Requires Co(2+) as cofactor. The cofactor is Zn(2+). NAD(+) serves as cofactor.

The protein resides in the cytoplasm. It catalyses the reaction 7-phospho-2-dehydro-3-deoxy-D-arabino-heptonate = 3-dehydroquinate + phosphate. It participates in metabolic intermediate biosynthesis; chorismate biosynthesis; chorismate from D-erythrose 4-phosphate and phosphoenolpyruvate: step 2/7. Catalyzes the conversion of 3-deoxy-D-arabino-heptulosonate 7-phosphate (DAHP) to dehydroquinate (DHQ). This is 3-dehydroquinate synthase from Streptococcus equi subsp. equi (strain 4047).